The chain runs to 361 residues: MDGLRLRFRRAYPGFELDIDLALPGRGVTALFGHSGSGKSTCLRCIAGLEKAAEGEVTINGETWQDSRRNLFVAPHRRALGYVFQDANLFRHLTVRRNLAFGLKRIAAAERRVELEQACALLGIEHLLERMPERLSGGEQQRVGIARALLTSPRLLLMDEPLASLDLKRKGEILPYLERLHEELDIPVLYVSHSPDEVARLADHLVLLENGKVRASGPIGETLARVDLPLALDDDAGVVIEGTVSDHDPAYGLLTLVLPGSALQMRVAHAPLAPGKRLRFKVQARDVSLNLRDDAQSSILNRLPVRVLELVDTDTAAHVLVRLDAGGNPLLARITRYSRDQLQLRPGQLLWAQIKSVAVLA.

Residues 1-235 form the ABC transporter domain; the sequence is MDGLRLRFRR…VDLPLALDDD (235 aa). 33 to 40 is a binding site for ATP; it reads GHSGSGKS. The Mop domain occupies 296-361; sequence QSSILNRLPV…AQIKSVAVLA (66 aa).

The protein belongs to the ABC transporter superfamily. Molybdate importer (TC 3.A.1.8) family. In terms of assembly, the complex is composed of two ATP-binding proteins (ModC), two transmembrane proteins (ModB) and a solute-binding protein (ModA).

It localises to the cell inner membrane. It catalyses the reaction molybdate(out) + ATP + H2O = molybdate(in) + ADP + phosphate + H(+). Its function is as follows. Part of the ABC transporter complex ModABC involved in molybdenum import. Responsible for energy coupling to the transport system. The polypeptide is Molybdenum import ATP-binding protein ModC (Pseudomonas aeruginosa (strain ATCC 15692 / DSM 22644 / CIP 104116 / JCM 14847 / LMG 12228 / 1C / PRS 101 / PAO1)).